The primary structure comprises 207 residues: ADP-ribose pyrophosphatase (207 aa).

Residues 37-38 (RE) and arginine 64 contribute to the substrate site. A Nudix hydrolase domain is found at 41-172 (EHFGAVAIVA…EIVNSIAIAG (132 aa)). Residue alanine 76 coordinates Mg(2+). The short motif at 77 to 99 (GLLDVAGEPPHLTAARELREEVG) is the Nudix box element. Leucine 78 serves as a coordination point for substrate. Glutamate 93 and glutamate 97 together coordinate Mg(2+). Substrate is bound by residues 114–116 (APG) and glutamate 120. A Mg(2+)-binding site is contributed by glutamate 142. Glutamate 142 functions as the Proton acceptor in the catalytic mechanism.

Belongs to the Nudix hydrolase family. As to quaternary structure, homodimer. The cofactor is Mg(2+). It depends on Mn(2+) as a cofactor.

The catalysed reaction is ADP-D-ribose + H2O = D-ribose 5-phosphate + AMP + 2 H(+). The enzyme catalyses 8-oxo-dGDP + H2O = 8-oxo-dGMP + phosphate + H(+). It carries out the reaction 8-oxo-GDP + H2O = 8-oxo-GMP + phosphate + H(+). Catalyzes the hydrolysis of ADP-ribose (ADPR) to AMP and ribose-5-phosphate. Can also hydrolyze ADP-mannose and ADP-glucose, with lower efficiency. Has weaker activity with NAD, GDP-sugars and UDP-sugars. Also catalyzes the conversion of 8-oxo-dGDP to 8-oxo-dGMP, and 8-oxo-GDP to 8-oxo-GMP. Functions in concert with MutT1 to detoxify 8-oxo-dGTP to 8-oxo-dGMP and may play an important role in supporting cellular growth under oxidative stress. The catalytic efficiency is much higher for the hydrolysis of ADPR than 8-oxo-dGTP, suggesting a more relevant biological role in hydrolysis of ADPR. In Mycobacterium tuberculosis (strain ATCC 25618 / H37Rv), this protein is ADP-ribose pyrophosphatase.